A 210-amino-acid polypeptide reads, in one-letter code: Ribosomal RNA large subunit methyltransferase E (210 aa).

Positions 61, 63, 81, 97, and 122 each coordinate S-adenosyl-L-methionine. The active-site Proton acceptor is the Lys-162.

It belongs to the class I-like SAM-binding methyltransferase superfamily. RNA methyltransferase RlmE family.

It localises to the cytoplasm. It catalyses the reaction uridine(2552) in 23S rRNA + S-adenosyl-L-methionine = 2'-O-methyluridine(2552) in 23S rRNA + S-adenosyl-L-homocysteine + H(+). Functionally, specifically methylates the uridine in position 2552 of 23S rRNA at the 2'-O position of the ribose in the fully assembled 50S ribosomal subunit. This is Ribosomal RNA large subunit methyltransferase E from Xanthomonas campestris pv. campestris (strain 8004).